A 389-amino-acid chain; its full sequence is MIVYGGGASEDGEGGGVVLKKGPWTVAEDETLAAYVREYGEGNWNSVQKKTWLARCGKSCRLRWANHLRPNLRKGSFTPEEERLIIQLHSQLGNKWARMAAQLPGRTDNEIKNYWNTRLKRFQRQGLPLYPPEYSQNNHQQQMYPQQPSSPLPSQTPASSFTFPLLQPPSLCPKRCYNTAFSPKASYISSPTNFLVSSPTFLHTHSSLSSYQSTNPVYSMKHELSSNQIPYSASLGVYQVSKFSDNGDCNQNLNTGLHTNTCQLLEDLMEEAEALADSFRAPKRRQIMAALEDNNNNNNFFSGGFGHRVSSNSLCSLQGLTPKEDESLQMNTMQDEDITKLLDWGSESEEISNGQSSVITTENNLVLDDHQFAFLFPVDDDTNNLPGIC.

HTH myb-type domains follow at residues G16–L68 and R69–Q123. DNA-binding regions (H-T-H motif) lie at residues W44 to L68 and W96 to L119. Positions P131–S159 are disordered. A compositionally biased stretch (low complexity) spans Q140–S159.

As to expression, accumulates in pollen grains and pollen tube. Mostly expressed in mature pollen grains, and, to a lower extent, in inflorescences and siliques.

It localises to the nucleus. In terms of biological role, transcription activator. Binds to 5'-CAACTGTC-3' and/or 5'-TAACAAA-3' motif in target gene promoter to promote their expression. Together with MYB101 and MYB120, functions as a male factor that controls pollen tube-synergid interaction in fertilization. Required for pollen tube growth arrest and sperm cell release in the female gametophyte, probably via the regulation of pollen tube-specific gene expression. The chain is Transcription factor MYB97 from Arabidopsis thaliana (Mouse-ear cress).